The sequence spans 244 residues: Protein crossbronx (244 aa).

In terms of domain architecture, UBC core spans 20 to 176 (QQEYKILAEY…VQKNIKESKD (157 aa)).

It belongs to the ubiquitin-conjugating enzyme family. FTS subfamily.

In Drosophila yakuba (Fruit fly), this protein is Protein crossbronx (cbx).